We begin with the raw amino-acid sequence, 62 residues long: Potassium channel toxin kappa-KTx 3.2 (62 aa).

A signal peptide spans 1-26; sequence MKSTLMTASLLILVLLSIVDYASVYA. Positions 27-36 are excised as a propeptide; that stretch reads ELIDSEISME. Intrachain disulfides connect cysteine 43/cysteine 61 and cysteine 47/cysteine 57.

The protein belongs to the short scorpion toxin superfamily. Potassium channel inhibitor kappa-KTx family. Kappa-KTx 3 subfamily. As to expression, expressed by the venom gland.

The protein localises to the secreted. In terms of biological role, potassium channel inhibitor (Kv). This chain is Potassium channel toxin kappa-KTx 3.2, found in Heterometrus petersii (Asian forest scorpion).